The sequence spans 609 residues: Nuclear factor 7, brain (609 aa).

A Tudor-knot domain is found at 21–75 (NVGSTYPCKRSDGSQHDAEIVKVRYNKQAGREEYYAHYVGLNRRQNEWVDKSRLV). Residues 74–84 (LVLTKPPKEGE) show a composition bias toward basic and acidic residues. Positions 74–129 (LVLTKPPKEGETNGTDQEVTDTAEQPDSKTPQKRKIEEPEPEPKKAKVEEKDASKN) are disordered. The segment covering 85-102 (TNGTDQEVTDTAEQPDSK) has biased composition (polar residues). Position 103 is a phosphothreonine; by CDK1 (T103). A compositionally biased stretch (basic and acidic residues) spans 107 to 127 (RKIEEPEPEPKKAKVEEKDAS). The RING-type zinc finger occupies 145–185 (CPLCVELFKDPVMVACGHNFCRSCIDKAWEGQSSFACPECR). The segment at 219-260 (RPLEKCSEHDERLKLYCKDDGTLSCVICRDSLKHASHNFLPI) adopts a B box-type zinc-finger fold. Residues C224, H227, C246, and H252 each coordinate Zn(2+). Positions 278 to 371 (LEASLKVTEQ…SLAKERMEDT (94 aa)) form a coiled coil. The B30.2/SPRY domain maps to 413-609 (GPIQYIMWKE…VDPLRFVHNK (197 aa)).

As to quaternary structure, monomer. Threonine (predominantly) and serine residues are phosphorylated during oocyte maturation, when CDK1 is active. At the neurula stage, high expression in dorsal embryo region including neural folds and somites. Also high expression in adult brain (CNS) and low expression in oocytes.

Its subcellular location is the nucleus. In terms of biological role, transcription factor that determines dorsal-ventral body axis. The chain is Nuclear factor 7, brain from Xenopus laevis (African clawed frog).